The chain runs to 246 residues: Ribonuclease 3 (246 aa).

The RNase III domain maps to 10–143; that stretch reads LERLEQALDY…LLGAIYLDGG (134 aa). E56 is a Mg(2+) binding site. D60 is an active-site residue. The Mg(2+) site is built by N129 and E132. E132 is a catalytic residue. Residues 170-239 form the DRBM domain; sequence DYKTLLQEYL…AQQALELLIE (70 aa).

The protein belongs to the ribonuclease III family. Homodimer. Mg(2+) serves as cofactor.

Its subcellular location is the cytoplasm. It carries out the reaction Endonucleolytic cleavage to 5'-phosphomonoester.. Its function is as follows. Digests double-stranded RNA. Involved in the processing of primary rRNA transcript to yield the immediate precursors to the large and small rRNAs (23S and 16S). Processes some mRNAs, and tRNAs when they are encoded in the rRNA operon. Processes pre-crRNA and tracrRNA of type II CRISPR loci if present in the organism. This Magnetococcus marinus (strain ATCC BAA-1437 / JCM 17883 / MC-1) protein is Ribonuclease 3.